Consider the following 228-residue polypeptide: Phosphoglycolate phosphatase (228 aa).

Asp9 acts as the Nucleophile in catalysis. Mg(2+) is bound by residues Asp9 and Asp11. Lys151 contributes to the substrate binding site. The Mg(2+) site is built by Asp174 and Asp178.

Belongs to the archaeal SPP-like hydrolase family. Requires Mg(2+) as cofactor.

The catalysed reaction is 2-phosphoglycolate + H2O = glycolate + phosphate. Functionally, catalyzes the dephosphorylation of 2-phosphoglycolate. The polypeptide is Phosphoglycolate phosphatase (Pyrobaculum neutrophilum (strain DSM 2338 / JCM 9278 / NBRC 100436 / V24Sta) (Thermoproteus neutrophilus)).